Here is a 212-residue protein sequence, read N- to C-terminus: Pyridoxine/pyridoxamine 5'-phosphate oxidase (212 aa).

Residues 8 to 11 (RTDY) and K66 contribute to the substrate site. FMN is bound by residues 61-66 (RIVLLK), 76-77 (FT), K83, and Q105. 3 residues coordinate substrate: Y123, R127, and S131. FMN is bound by residues 140–141 (QS) and W184. Residue 190–192 (RLH) coordinates substrate. R194 is an FMN binding site.

The protein belongs to the pyridoxamine 5'-phosphate oxidase family. As to quaternary structure, homodimer. Requires FMN as cofactor.

It carries out the reaction pyridoxamine 5'-phosphate + O2 + H2O = pyridoxal 5'-phosphate + H2O2 + NH4(+). The catalysed reaction is pyridoxine 5'-phosphate + O2 = pyridoxal 5'-phosphate + H2O2. It functions in the pathway cofactor metabolism; pyridoxal 5'-phosphate salvage; pyridoxal 5'-phosphate from pyridoxamine 5'-phosphate: step 1/1. The protein operates within cofactor metabolism; pyridoxal 5'-phosphate salvage; pyridoxal 5'-phosphate from pyridoxine 5'-phosphate: step 1/1. Functionally, catalyzes the oxidation of either pyridoxine 5'-phosphate (PNP) or pyridoxamine 5'-phosphate (PMP) into pyridoxal 5'-phosphate (PLP). The sequence is that of Pyridoxine/pyridoxamine 5'-phosphate oxidase from Ralstonia pickettii (strain 12J).